Here is a 261-residue protein sequence, read N- to C-terminus: uncharacterized protein (261 aa).

His7, His9, Glu96, His132, His156, and Asp211 together coordinate a divalent metal cation.

Belongs to the metallo-dependent hydrolases superfamily. TatD-type hydrolase family. A divalent metal cation is required as a cofactor.

This is an uncharacterized protein from Mycoplasma pneumoniae (strain ATCC 29342 / M129 / Subtype 1) (Mycoplasmoides pneumoniae).